Here is a 389-residue protein sequence, read N- to C-terminus: Methylthioribose kinase (389 aa).

Residues Asn37, Lys52, and 106–108 (EDL) each bind ATP. Position 224 (Asp224) interacts with substrate. 241–243 (DPE) is an ATP binding site. Arg331 contacts substrate.

This sequence belongs to the methylthioribose kinase family. In terms of assembly, homodimer.

It catalyses the reaction 5-(methylsulfanyl)-D-ribose + ATP = 5-(methylsulfanyl)-alpha-D-ribose 1-phosphate + ADP + H(+). It participates in amino-acid biosynthesis; L-methionine biosynthesis via salvage pathway; S-methyl-5-thio-alpha-D-ribose 1-phosphate from S-methyl-5'-thioadenosine (hydrolase route): step 2/2. Functionally, catalyzes the phosphorylation of methylthioribose into methylthioribose-1-phosphate. The chain is Methylthioribose kinase from Exiguobacterium sibiricum (strain DSM 17290 / CCUG 55495 / CIP 109462 / JCM 13490 / 255-15).